Reading from the N-terminus, the 215-residue chain is MHRDAWLPRPAFSLTGLSLFFSLVPPGRSMEVTVPATLNVLNGSDARLPCTFNSCYTVNHKQFSLNWTYQECNNCSEEMFLQFRMKIINLKLERFQDRVEFSGNPSKYDVSVMLRNVQPEDEGIYNCYIMNPPDRHRGHGKIHLQVLMEEPPERDSTVAVIVGASVGGFLAVVILVLMVVKCVRRKKEQKLSTDDLKTEEEGKTDGEGNPDDGAK.

Residues 1–29 (MHRDAWLPRPAFSLTGLSLFFSLVPPGRS) form the signal peptide. At 30–157 (MEVTVPATLN…MEEPPERDST (128 aa)) the chain is on the extracellular side. The 123-residue stretch at 32–154 (VTVPATLNVL…QVLMEEPPER (123 aa)) folds into the Ig-like C2-type domain. Residues Asn42, Asn66, and Asn74 are each glycosylated (N-linked (GlcNAc...) asparagine). 2 cysteine pairs are disulfide-bonded: Cys50-Cys127 and Cys72-Cys75. The chain crosses the membrane as a helical span at residues 158–179 (VAVIVGASVGGFLAVVILVLMV). The Cytoplasmic segment spans residues 180 to 215 (VKCVRRKKEQKLSTDDLKTEEEGKTDGEGNPDDGAK). Residues 187–215 (KEQKLSTDDLKTEEEGKTDGEGNPDDGAK) are disordered. Residues 189–215 (QKLSTDDLKTEEEGKTDGEGNPDDGAK) are compositionally biased toward basic and acidic residues. Ser192 bears the Phosphoserine mark. Thr204 bears the Phosphothreonine mark.

This sequence belongs to the sodium channel auxiliary subunit SCN2B (TC 8.A.17) family. A voltage-gated sodium (Nav) channel consists of an ion-conducting pore-forming alpha subunit functional on its own that is regulated by one or more beta subunits. The beta subunit SCN2B is disulfide-linked to the pore-forming alpha subunit. Interacts with SCN1A; regulatory subunit of SCN1A/Nav1.1. Interacts with SCN2A; regulatory subunit of SCN2A/Nav1.2. Interacts with SCN3A; regulatory subunit of SCN3A/Nav1.3. Interacts with SCN5A; regulatory subunit of SCN5A/Nav1.5. Interacts with SCN8A; regulatory subunit of SCN8A/Nav1.6. Interacts with SCN9A; regulatory subunit of SCN9A/Nav1.7. Interacts with SCN10A; regulatory subunit of SCN10A/Nav1.8. Interacts with TNR; may play a crucial role in clustering and regulation of activity of SCN2B-containing Nav channels at nodes of Ranvier.

It is found in the cell membrane. The protein resides in the cell projection. It localises to the axon. Regulatory subunit of multiple voltage-gated sodium (Nav) channels directly mediating the depolarization of excitable membranes. Navs, also called VGSCs (voltage-gated sodium channels) or VDSCs (voltage-dependent sodium channels), operate by switching between closed and open conformations depending on the voltage difference across the membrane. In the open conformation they allow Na(+) ions to selectively pass through the pore, along their electrochemical gradient. The influx of Na+ ions provokes membrane depolarization, initiating the propagation of electrical signals throughout cells and tissues. The accessory beta subunits participate in localization and functional modulation of the Nav channels. Modulates the activity of SCN1A/Nav1.1, SCN2A/Nav1.2, SCN2A/Nav1.3, SCN5A/Nav1.5, SCN8A/Nav1.6, SCN9A/Nav1.7 and SCN10A/Nav1.8. This is Sodium channel regulatory subunit beta-2 from Homo sapiens (Human).